The chain runs to 134 residues: Putative pre-16S rRNA nuclease (134 aa).

Belongs to the YqgF nuclease family.

The protein resides in the cytoplasm. Its function is as follows. Could be a nuclease involved in processing of the 5'-end of pre-16S rRNA. This Helicobacter pylori (strain P12) protein is Putative pre-16S rRNA nuclease.